The sequence spans 344 residues: Heat-inducible transcription repressor HrcA (344 aa).

Belongs to the HrcA family.

Negative regulator of class I heat shock genes (grpE-dnaK-dnaJ and groELS operons). Prevents heat-shock induction of these operons. The sequence is that of Heat-inducible transcription repressor HrcA from Geobacillus sp. (strain WCH70).